Consider the following 317-residue polypeptide: Nucleosome assembly protein 1;4 (317 aa).

The Nuclear export signal signature appears at 52–67; it reads LSPKVTKRVLFLKDIQ. Positions 214 to 219 match the Nuclear localization signal motif; that stretch reads KKKTKK. The tract at residues 297 to 317 is disordered; it reads ALVDEDDSDDNDDDDNDEKSD. The span at 298–317 shows a compositional bias: acidic residues; sequence LVDEDDSDDNDDDDNDEKSD.

It belongs to the nucleosome assembly protein (NAP) family. In terms of assembly, can form homomeric and heteromeric protein complexes with NAP1;1, NAP1;2 and NAP1;3. Binds histone H2A. In terms of tissue distribution, expressed in the root segment covering the apical end of the differentiation zone, the elongation zone of the root and the mature pollen within the anthers of open flowers.

The protein resides in the nucleus. It localises to the cytoplasm. Its function is as follows. May modulate chromatin structure by regulation of nucleosome assembly/disassembly. The polypeptide is Nucleosome assembly protein 1;4 (NAP1;4) (Arabidopsis thaliana (Mouse-ear cress)).